Here is a 504-residue protein sequence, read N- to C-terminus: MSKDELKDKKRKVEDEELKSKKKLKKDKKDKKDKKDKKDKKDKKEKKEKKEKKDKKSETESFAASASQSDIDEFLKENEVTVSDPSGSNIVPYLDFSQVSFIDQIQKEISKFPKPTPIQAVSWPYLLAGKDVIGIAETGSGKTFAFGVPAINNIVTSGDKSSSVKVLVISPTRELASQIYDNLIVLTDACGLRSCCVYGGVPKDQQREDLRRSQVVVATPGRLLDLIEEGSVDLSHVNYLVLDEADRMLEKGFEEDIKKIIRQTRSTSRQTLMFTATWPKEVRELASSFMSEPVKVSIGNRDELSANKRITQIVEVVDPFRKEKKLLELLKKYHSGPTKNDKVLIFALYKKEASRVERNLKYNGYDVAAIHGDLSQQQRTQALNEFKAGKCNLLLATDVAARGLDIPNVKTVINLTFPLTVEDYVHRIGRTGRAGQYGTAHTLFTEQEKHLAGALVNVLNGAGQPVPEELKKFGTHTKKKEHSAYGAFFKDVDLSKKPKKITFD.

Residues 1-14 (MSKDELKDKKRKVE) show a composition bias toward basic and acidic residues. A disordered region spans residues 1-65 (MSKDELKDKK…KSETESFAAS (65 aa)). A compositionally biased stretch (basic residues) spans 20–53 (SKKKLKKDKKDKKDKKDKKDKKDKKEKKEKKEKK). The Q motif signature appears at 94–120 (LDFSQVSFIDQIQKEISKFPKPTPIQA). The Helicase ATP-binding domain maps to 123 to 296 (WPYLLAGKDV…SSFMSEPVKV (174 aa)). ATP is bound at residue 136–143 (AETGSGKT). The short motif at 243–246 (DEAD) is the DEAD box element. A Helicase C-terminal domain is found at 325 to 474 (KLLELLKKYH…PVPEELKKFG (150 aa)).

The protein belongs to the DEAD box helicase family. DDX5/DBP2 subfamily.

It localises to the nucleus. The protein localises to the nucleolus. The catalysed reaction is ATP + H2O = ADP + phosphate + H(+). In terms of biological role, ATP-dependent RNA helicase required for 60S ribosomal subunit synthesis. Involved in efficient pre-rRNA processing, predominantly at site A3, which is necessary for the normal formation of 25S and 5.8S rRNAs. The sequence is that of ATP-dependent RNA helicase DBP3 (DBP3) from Kluyveromyces lactis (strain ATCC 8585 / CBS 2359 / DSM 70799 / NBRC 1267 / NRRL Y-1140 / WM37) (Yeast).